A 633-amino-acid polypeptide reads, in one-letter code: Sodium- and chloride-dependent glycine transporter 1 (633 aa).

The Cytoplasmic segment spans residues 1-30 (MGLCVNGAVPSEATKKDENLKRGNWGNQIE). 3 helical membrane-spanning segments follow: residues 31-51 (FVLTSVGYAVGLGNVWRFPYL), 58-78 (GAFMFPYFIMLIFCGIPLFFM), and 113-133 (YIGIYYNVVICIAFYYFFASM). At 134–208 (NRVLPWTYCN…ISEDIGDFGE (75 aa)) the chain is on the extracellular side. 4 N-linked (GlcNAc...) asparagine glycosylation sites follow: Asn-158, Asn-164, Asn-173, and Asn-179. Transmembrane regions (helical) follow at residues 209–229 (VQLPLLGCLGVSWLVVFLCLI), 238–258 (VVYFTATFPYVVLTILFIRGI), 283–303 (VWGDAASQIFYSLGCAWGGLI), 330–350 (SVYAGFVIFSILGFMATHLGV), 373–393 (LLPISPLWSILFFFMLILLGL), 429–449 (IIGFLLGIPLTTQAGIYWLLL), 453–473 (YAASFSLVIISCIMCIAVMYI), 493–513 (LFFQICWRFISPGIIFFILIF), and 533–553 (ITIGFLMALSSVICIPLYAIF). Residues 554–633 (KIWCSEGDTF…GQAHTQDSKV (80 aa)) are Cytoplasmic-facing. Positions 588–633 (RYAQMSSTRSESNPEAQPLNPEKMKEDLSLTIQGSNGQAHTQDSKV) are disordered. Composition is skewed to polar residues over residues 591-602 (QMSSTRSESNPE) and 617-633 (LTIQGSNGQAHTQDSKV).

It belongs to the sodium:neurotransmitter symporter (SNF) (TC 2.A.22) family. SLC6A9 subfamily. As to expression, first expressed in early tailbud stage embryos in the midbrain and anterior spinal cord, and weakly in the hindbrain. By late tailbud stages, expression extends posteriorly in the spinal cord to appear in between somites. Expressed in the forebrain, retina, between the somites and in the blood islands by the swimming tadpole stages.

The protein resides in the cell membrane. The catalysed reaction is glycine(out) + chloride(out) + 2 Na(+)(out) = glycine(in) + chloride(in) + 2 Na(+)(in). Its function is as follows. Sodium- and chloride-dependent glycine transporter which is essential for regulating glycine concentrations at inhibitory glycinergic synapses. The protein is Sodium- and chloride-dependent glycine transporter 1 of Xenopus laevis (African clawed frog).